Reading from the N-terminus, the 300-residue chain is E3 ubiquitin-protein ligase RNF212B (300 aa).

The RING-type zinc finger occupies 6–40 (CNQCFRKDGAHFFVTSCGHIFCKKCVTLEKCAVCG). Positions 87-124 (LLIAFYKHRITKLETAMQEAQQALVSQDKELSVLRKEN) form a coiled coil. The segment at 141–232 (YQGSRSITPR…SYRTSSASSG (92 aa)) is disordered. Positions 155–165 (TSPSQSVTPRP) are enriched in polar residues. Residues 166-182 (SFQHSSQVVSRSSSAES) show a composition bias toward low complexity. The segment covering 191–200 (GSLGQGGRGL) has biased composition (gly residues). Over residues 211–232 (NETPSPASTHSLSYRTSSASSG) the composition is skewed to polar residues.

Homodimer. Autoubiquitinated.

The protein resides in the chromosome. The catalysed reaction is S-ubiquitinyl-[E2 ubiquitin-conjugating enzyme]-L-cysteine + [acceptor protein]-L-lysine = [E2 ubiquitin-conjugating enzyme]-L-cysteine + N(6)-ubiquitinyl-[acceptor protein]-L-lysine.. Its pathway is protein modification; protein ubiquitination. Functionally, ubiquitin E3 ligase that acts as a crucial factor for crossing-over (CO) formation during meiosis. Essential for normal prophase I progression and for ensuring appropriate CO designation in meiosis. Recruits key components of the cross-over machinery either directly ou indirectly, leading to the activation of the MutL-gamma complex. The function of RNF212B in CO designation is dependent on its catalytic activity. The sequence is that of E3 ubiquitin-protein ligase RNF212B (RNF212B) from Homo sapiens (Human).